The sequence spans 265 residues: Anaphase-promoting complex subunit 9 (265 aa).

In terms of assembly, the APC/C is composed of at least 13 subunits that stay tightly associated throughout the cell cycle: APC1, APC2, APC4, APC5, APC9, APC11, CDC16, CDC23, CDC26, CDC27, DOC1, MND2 and SWM1.

It is found in the cytoplasm. The protein resides in the nucleus. The protein operates within protein modification; protein ubiquitination. In terms of biological role, component of the anaphase promoting complex/cyclosome (APC/C), a cell cycle-regulated E3 ubiquitin-protein ligase complex that controls progression through mitosis and the G1 phase of the cell cycle. The APC/C is thought to confer substrate specificity and, in the presence of ubiquitin-conjugating E2 enzymes, it catalyzes the formation of protein-ubiquitin conjugates that are subsequently degraded by the 26S proteasome. In early mitosis, the APC/C is activated by CDC20 and targets securin PDS1, the B-type cyclin CLB5, and other anaphase inhibitory proteins for proteolysis, thereby triggering the separation of sister chromatids at the metaphase-to-anaphase transition. In late mitosis and in G1, degradation of CLB5 allows activation of the APC/C by CDH1, which is needed to destroy CDC20 and the B-type cyclin CLB2 to allow exit from mitosis and creating the low CDK state necessary for cytokinesis and for reforming prereplicative complexes in G1 prior to another round of replication. This is Anaphase-promoting complex subunit 9 (APC9) from Saccharomyces cerevisiae (strain ATCC 204508 / S288c) (Baker's yeast).